Reading from the N-terminus, the 466-residue chain is Coproporphyrinogen III oxidase (466 aa).

Residues 9-14 (GAGITG), 34-35 (EA), Lys42, 56-59 (GPES), Val254, and 446-448 (VGL) each bind FAD.

Belongs to the protoporphyrinogen/coproporphyrinogen oxidase family. Coproporphyrinogen III oxidase subfamily. FAD is required as a cofactor.

It localises to the cytoplasm. The enzyme catalyses coproporphyrinogen III + 3 O2 = coproporphyrin III + 3 H2O2. It functions in the pathway porphyrin-containing compound metabolism; protoheme biosynthesis. Its activity is regulated as follows. The generation of protoporphyrin IX, but not coproporphyrin III, is stimulated by heme-bound HemQ. This stimulatory effect is mediated by superoxide. Inhibited by acifluorfen analogs. Involved in coproporphyrin-dependent heme b biosynthesis. Catalyzes the oxidation of coproporphyrinogen III to coproporphyrin III. Can also oxidize protoporphyrinogen IX. The polypeptide is Coproporphyrinogen III oxidase (Staphylococcus aureus (strain NCTC 8325 / PS 47)).